The sequence spans 418 residues: D-amino acid dehydrogenase (418 aa).

3–17 (VLVLGAGVAGVSSAW) is a binding site for FAD.

It belongs to the DadA oxidoreductase family. Requires FAD as cofactor.

It carries out the reaction a D-alpha-amino acid + A + H2O = a 2-oxocarboxylate + AH2 + NH4(+). Oxidative deamination of D-amino acids. The polypeptide is D-amino acid dehydrogenase (Neisseria meningitidis serogroup A / serotype 4A (strain DSM 15465 / Z2491)).